The chain runs to 385 residues: Probable nitrate transporter NarT (385 aa).

A run of 12 helical transmembrane segments spans residues 14-34, 47-67, 69-89, 97-117, 139-159, 161-181, 205-225, 246-266, 277-297, 302-322, 330-350, and 359-379; these read TLSL…MPYI, IILA…GYLT, IIGA…PIFF, GMLM…SVGV, GNIG…IIGW, TTVR…FIFG, LYYL…FGLF, GVFI…GDKF, IIMI…LFTI, ISIC…SYFA, GIVS…ITYV, and LAFI…GHLY.

It belongs to the major facilitator superfamily. Nitrate/nitrite porter (TC 2.A.1.8) family.

It is found in the cell membrane. Functionally, probably required for nitrate uptake under anoxic conditions. Also possibly involved in excretion of nitrite produced by the dissimilatory reduction of nitrate. The polypeptide is Probable nitrate transporter NarT (narT) (Staphylococcus haemolyticus (strain JCSC1435)).